The chain runs to 143 residues: Large ribosomal subunit protein uL16c (143 aa).

Belongs to the universal ribosomal protein uL16 family. Part of the 50S ribosomal subunit.

It localises to the plastid. The protein localises to the chloroplast. The sequence is that of Large ribosomal subunit protein uL16c from Chlorokybus atmophyticus (Soil alga).